The following is a 199-amino-acid chain: Oleosin 21.2 kDa (199 aa).

A compositionally biased stretch (basic and acidic residues) spans 1-14 (MADTHRVDRTDRHF). The segment at 1-31 (MADTHRVDRTDRHFQFQSPYEGGRGQGQYEG) is disordered. N-acetylalanine is present on Ala-2. Residues 2-56 (ADTHRVDRTDRHFQFQSPYEGGRGQGQYEGDRGYGGGGYKSMMPESGPSSTQVLS) form a polar region. Residues 22-31 (GGRGQGQYEG) show a composition bias toward gly residues. The next 3 helical transmembrane spans lie at 51–71 (STQV…LALA), 72–92 (GLLL…FLLF), and 96–116 (IVPA…SGMF). The interval 57 to 128 (LLIGVPVVGS…TGLSSISWVM (72 aa)) is hydrophobic. The disordered stretch occupies residues 159 to 199 (KGKEMGQHVQNKAQDVKQYDISKPHDTTTKGHETQGRTTAA). The span at 172-193 (QDVKQYDISKPHDTTTKGHETQ) shows a compositional bias: basic and acidic residues.

It belongs to the oleosin family.

The protein resides in the lipid droplet. It is found in the membrane. In terms of biological role, may have a structural role to stabilize the lipid body during desiccation of the seed by preventing coalescence of the oil. Probably interacts with both lipid and phospholipid moieties of lipid bodies. May also provide recognition signals for specific lipase anchorage in lipolysis during seedling growth. The polypeptide is Oleosin 21.2 kDa (Arabidopsis thaliana (Mouse-ear cress)).